The chain runs to 370 residues: Flagellar P-ring protein (370 aa).

Residues 1-21 (MRLFSVVLAVFTLLLPSQAFA) form the signal peptide.

The protein belongs to the FlgI family. The basal body constitutes a major portion of the flagellar organelle and consists of four rings (L,P,S, and M) mounted on a central rod.

It is found in the periplasm. The protein localises to the bacterial flagellum basal body. Functionally, assembles around the rod to form the L-ring and probably protects the motor/basal body from shearing forces during rotation. This chain is Flagellar P-ring protein, found in Alteromonas mediterranea (strain DSM 17117 / CIP 110805 / LMG 28347 / Deep ecotype).